The sequence spans 186 residues: Sec-independent protein translocase protein TatB (186 aa).

The chain crosses the membrane as a helical span at residues 1 to 21; it reads MFDIGFSELILLMVLGLVVLG. Residues 120 to 186 form a disordered region; the sequence is NAEKSQNAIS…SKSQSSKTKS (67 aa). The span at 177–186 shows a compositional bias: polar residues; sequence SKSQSSKTKS.

It belongs to the TatB family. In terms of assembly, the Tat system comprises two distinct complexes: a TatABC complex, containing multiple copies of TatA, TatB and TatC subunits, and a separate TatA complex, containing only TatA subunits. Substrates initially bind to the TatABC complex, which probably triggers association of the separate TatA complex to form the active translocon.

It is found in the cell inner membrane. Its function is as follows. Part of the twin-arginine translocation (Tat) system that transports large folded proteins containing a characteristic twin-arginine motif in their signal peptide across membranes. Together with TatC, TatB is part of a receptor directly interacting with Tat signal peptides. TatB may form an oligomeric binding site that transiently accommodates folded Tat precursor proteins before their translocation. The protein is Sec-independent protein translocase protein TatB of Haemophilus influenzae (strain ATCC 51907 / DSM 11121 / KW20 / Rd).